A 296-amino-acid polypeptide reads, in one-letter code: Elongation factor Ts (296 aa).

Residues 79 to 82 (TDFV) form an involved in Mg(2+) ion dislocation from EF-Tu region.

This sequence belongs to the EF-Ts family.

It localises to the cytoplasm. Associates with the EF-Tu.GDP complex and induces the exchange of GDP to GTP. It remains bound to the aminoacyl-tRNA.EF-Tu.GTP complex up to the GTP hydrolysis stage on the ribosome. This is Elongation factor Ts (tsf) from Spiroplasma citri.